Consider the following 28-residue polypeptide: Nicotinic acetylcholine receptor-binding protein Mnn-3C (28 aa).

A disulfide bond links C3 and C24.

This sequence belongs to the three-finger toxin family. Short-chain subfamily. As to expression, expressed by the venom gland.

Its subcellular location is the secreted. Binds and may inhibit nicotinic acetylcholine receptors (nAChR). The polypeptide is Nicotinic acetylcholine receptor-binding protein Mnn-3C (Micrurus nigrocinctus (Central American coral snake)).